Consider the following 221-residue polypeptide: uncharacterized protein (221 aa).

This is an uncharacterized protein from Archaeoglobus fulgidus (strain ATCC 49558 / DSM 4304 / JCM 9628 / NBRC 100126 / VC-16).